The primary structure comprises 143 residues: Ribosome-binding factor A (143 aa).

Residues 123 to 143 (DNSLQENYKDSDKETKVEKLR) are disordered.

Belongs to the RbfA family. In terms of assembly, monomer. Binds 30S ribosomal subunits, but not 50S ribosomal subunits or 70S ribosomes.

Its subcellular location is the cytoplasm. One of several proteins that assist in the late maturation steps of the functional core of the 30S ribosomal subunit. Associates with free 30S ribosomal subunits (but not with 30S subunits that are part of 70S ribosomes or polysomes). Required for efficient processing of 16S rRNA. May interact with the 5'-terminal helix region of 16S rRNA. The chain is Ribosome-binding factor A from Francisella philomiragia subsp. philomiragia (strain ATCC 25017 / CCUG 19701 / FSC 153 / O#319-036).